The primary structure comprises 401 residues: Phosphoglycerate kinase (401 aa).

Substrate is bound by residues 21–23 (DLN), R37, 60–63 (HLGR), R119, and R152. Residues K203, E325, and 351-354 (GGDT) contribute to the ATP site.

It belongs to the phosphoglycerate kinase family. As to quaternary structure, monomer.

It localises to the cytoplasm. It catalyses the reaction (2R)-3-phosphoglycerate + ATP = (2R)-3-phospho-glyceroyl phosphate + ADP. The protein operates within carbohydrate degradation; glycolysis; pyruvate from D-glyceraldehyde 3-phosphate: step 2/5. This is Phosphoglycerate kinase from Acidithiobacillus ferrooxidans (strain ATCC 23270 / DSM 14882 / CIP 104768 / NCIMB 8455) (Ferrobacillus ferrooxidans (strain ATCC 23270)).